Consider the following 572-residue polypeptide: Mitochondrial distribution and morphology protein 34 (572 aa).

The SMP-LTD domain occupies 1-195; it reads MAFNFNWSPL…LPAIIHRLSL (195 aa). 4 disordered regions span residues 212–236, 321–426, 477–522, and 553–572; these read TASANGEGPGQDPLASPPQDPVDAL, VGSM…PDND, SATP…DNPT, and CGPFWDRHSQEESPPPAYGH. Positions 330 to 348 are enriched in low complexity; it reads SASMVSSQSRSSTPSHTFS. Basic residues predominate over residues 358–370; that stretch reads RHSKAHARKRKKR. Basic and acidic residues predominate over residues 371–381; that stretch reads VVDLRRPKTTD. Polar residues-rich tracts occupy residues 387–400 and 500–511; these read SDESSFTESTSAPS and DSSAGSSRQLPS.

Belongs to the MDM34 family. In terms of assembly, component of the ER-mitochondria encounter structure (ERMES) or MDM complex, composed of mmm1, mdm10, mdm12 and mdm34.

The protein localises to the mitochondrion outer membrane. Its function is as follows. Component of the ERMES/MDM complex, which serves as a molecular tether to connect the endoplasmic reticulum (ER) and mitochondria. Components of this complex are involved in the control of mitochondrial shape and protein biogenesis, and function in nonvesicular lipid trafficking between the ER and mitochondria. Mdm34 is required for the interaction of the ER-resident membrane protein mmm1 and the outer mitochondrial membrane-resident beta-barrel protein mdm10. The protein is Mitochondrial distribution and morphology protein 34 of Aspergillus fumigatus (strain CBS 144.89 / FGSC A1163 / CEA10) (Neosartorya fumigata).